The primary structure comprises 349 residues: Thiamine thiazole synthase, chloroplastic (349 aa).

A chloroplast-targeting transit peptide spans 1–45; that stretch reads MAAIASTLSLSSTKPQRLFDSSFHGSAISAAPISIGLKPRSFSVR. Residues Ala-94, 114–115, Gly-122, and Ala-187 each bind substrate; that span reads EQ. 2,3-didehydroalanine (Cys) is present on Cys-216. Residues Asp-218, His-233, Met-285, and 295-297 each bind substrate; that span reads RMG.

It belongs to the THI4 family. Homooctamer. Interacts with RBCX1 and RBCX1. Interacts with CPK33. It depends on Fe cation as a cofactor. Post-translationally, during the catalytic reaction, a sulfide is transferred from Cys-216 to a reaction intermediate, generating a dehydroalanine residue. Not phosphorylated in vitro by CPK33. Expressed at high levels in chloroplast-containing parenchymatic cells of leaves, inflorescence shoots and flowers, and at lower levels in the vascular system. In young plants, detected in roots and shoots including cotyledons, leaves and hypocotyls. Also observed in apical meristematic regions, siliques and embryos. Low expression in roots, limited to the vascular tissue. Broadly expressed in roots, cotyledons, leaves, hypocotyls, inflorescences, siliques, and strongly in guard cells.

It localises to the plastid. Its subcellular location is the chloroplast. The protein localises to the mitochondrion. The protein resides in the cell membrane. The enzyme catalyses [ADP-thiazole synthase]-L-cysteine + glycine + NAD(+) = [ADP-thiazole synthase]-dehydroalanine + ADP-5-ethyl-4-methylthiazole-2-carboxylate + nicotinamide + 3 H2O + 2 H(+). Its function is as follows. Involved in biosynthesis of the thiamine precursor thiazole. Catalyzes the conversion of NAD and glycine to adenosine diphosphate 5-(2-hydroxyethyl)-4-methylthiazole-2-carboxylic acid (ADT), an adenylated thiazole intermediate. The reaction includes an iron-dependent sulfide transfer from a conserved cysteine residue of the protein to a thiazole intermediate. The enzyme can only undergo a single turnover, which suggests it is a suicide enzyme. May have additional roles in adaptation to various stress conditions and in DNA damage tolerance. Acts as a positive regulator for the abscisic acid-induced activation of slow type anion channels during stomatal closure by repressing CPK33 kinase activity. In Arabidopsis thaliana (Mouse-ear cress), this protein is Thiamine thiazole synthase, chloroplastic.